The sequence spans 1400 residues: Alpha-(1-&gt;3)-arabinofuranosyltransferase (1400 aa).

The first 30 residues, 1–30, serve as a signal peptide directing secretion; the sequence is MAPLSRKWLPVVGAVALALTFAQSPGQVSP. The next 8 helical transmembrane spans lie at 67-87, 91-111, 139-159, 179-199, 215-235, 282-302, 314-334, and 401-421; these read YLFPHGTFFVIGHLLGVPGWV, LWWAVLLTVGFWGLLRVAEAL, ISSETLPMMLAPWVLLPTILA, VALMGAVNAIATLAGCLPAVI, AWWLLAMALATLWWVMALTQL, LVTGSAAILGTCLVAAAGLAG, LVTMLLVGVVLLAVGHRGGLA, and VAVAVVALTALMVSTSLAWTG. Residues 700–883 form the F5/8 type C domain; the sequence is AEPVVGGWTG…WDLGSELLGR (184 aa). 4 helical membrane-spanning segments follow: residues 1256-1276, 1297-1317, 1338-1358, and 1369-1389; these read LYRASLAIGLALLPLLALLAF, WAAAGVLAAGAVIASIAGVMV, VTVGLAAGGLILAGAALSRHP, and WASVQLLALISVSVVAASVVA.

Its subcellular location is the membrane. It catalyses the reaction Adds an alpha-D-arabinofuranosyl group from trans,octacis-decaprenylphospho-beta-D-arabinofuranose at the 3-O-position of an alpha-(1-&gt;5)-arabinofuranan chain attached to a beta-(1-&gt;5)-galactofuranan chain.. Its pathway is cell wall biogenesis; cell wall polysaccharide biosynthesis. Its function is as follows. Involved in the biosynthesis of the arabinogalactan (AG) region of the mycolylarabinogalactan-peptidoglycan (mAGP) complex, an essential component of the mycobacterial cell wall. Catalyzes the addition of an arabinofuranosyl (Araf) residue from the sugar donor decaprenyl-phospho-arabinose (DPA) on the C-3 of an alpha-(1-&gt;5)-linked Araf from the arabinan backbone of AG. This Mycobacterium tuberculosis (strain ATCC 25618 / H37Rv) protein is Alpha-(1-&gt;3)-arabinofuranosyltransferase (aftD).